A 639-amino-acid polypeptide reads, in one-letter code: Altered inheritance of mitochondria protein 9, mitochondrial (639 aa).

Residues 1–45 constitute a mitochondrion transit peptide; the sequence is MLMSKAPKLGNLLSKNSIKIVSGSKLRCNLKYINVRYISDTPDKV. The segment at 619-639 is disordered; sequence VSSEAQSEVQSEVQSSTENKD.

The protein belongs to the AIM9 family.

Its subcellular location is the mitochondrion. This chain is Altered inheritance of mitochondria protein 9, mitochondrial (AIM9), found in Vanderwaltozyma polyspora (strain ATCC 22028 / DSM 70294 / BCRC 21397 / CBS 2163 / NBRC 10782 / NRRL Y-8283 / UCD 57-17) (Kluyveromyces polysporus).